Here is a 244-residue protein sequence, read N- to C-terminus: Krueppel-like factor 9 (244 aa).

2 disordered regions span residues 24-51 (VPEH…GDPG) and 79-143 (PSVC…EKRH). A compositionally biased stretch (basic and acidic residues) spans 32-51 (DAERLRLPEREVTKEHGDPG). Ser122 is modified (phosphoserine). The segment covering 134–143 (KGKHASEKRH) has biased composition (basic residues). 3 C2H2-type zinc fingers span residues 143-167 (HKCP…YRVH), 173-197 (FPCT…YRTH), and 203-225 (FRCP…ARRH).

It belongs to the Sp1 C2H2-type zinc-finger protein family. As to quaternary structure, interacts with ZZEF1.

It localises to the nucleus. Transcription factor that binds to GC box promoter elements. Selectively activates mRNA synthesis from genes containing tandem repeats of GC boxes but represses genes with a single GC box. Acts as an epidermal circadian transcription factor regulating keratinocyte proliferation. This is Krueppel-like factor 9 (Klf9) from Rattus norvegicus (Rat).